The chain runs to 331 residues: UPF0324 membrane protein SAR0338 (331 aa).

11 helical membrane passes run 9-26, 31-48, 69-88, 93-115, 122-144, 154-176, 183-202, 217-234, 247-269, 273-295, and 308-330; these read FMIG…SFLA, ILDK…AILY, LLRF…DIIG, LLAI…NKLL, ALLL…APIF, SIGI…YAIF, YGAW…LAGG, LGRV…ILIM, ISIP…VTIP, LNIL…GLNV, and LMTI…HWLY.

This sequence belongs to the UPF0324 family.

The protein resides in the cell membrane. This Staphylococcus aureus (strain MRSA252) protein is UPF0324 membrane protein SAR0338.